The chain runs to 406 residues: Tryptophan 2,3-dioxygenase (406 aa).

Serine 19 carries the phosphoserine modification. Residues 72–76 and arginine 144 each bind substrate; that span reads FIITH. Histidine 328 is a binding site for heme. Threonine 342 is a binding site for substrate.

The protein belongs to the tryptophan 2,3-dioxygenase family. In terms of assembly, homotetramer. Dimer of dimers. The cofactor is heme.

It catalyses the reaction L-tryptophan + O2 = N-formyl-L-kynurenine. The protein operates within amino-acid degradation; L-tryptophan degradation via kynurenine pathway; L-kynurenine from L-tryptophan: step 1/2. Its function is as follows. Heme-dependent dioxygenase that catalyzes the oxidative cleavage of the L-tryptophan (L-Trp) pyrrole ring and converts L-tryptophan to N-formyl-L-kynurenine. Catalyzes the oxidative cleavage of the indole moiety. In Bos taurus (Bovine), this protein is Tryptophan 2,3-dioxygenase.